We begin with the raw amino-acid sequence, 371 residues long: 4-hydroxy-3-methylbut-2-en-1-yl diphosphate synthase (flavodoxin) (371 aa).

Residues C269, C272, C304, and E311 each coordinate [4Fe-4S] cluster.

It belongs to the IspG family. Requires [4Fe-4S] cluster as cofactor.

The catalysed reaction is (2E)-4-hydroxy-3-methylbut-2-enyl diphosphate + oxidized [flavodoxin] + H2O + 2 H(+) = 2-C-methyl-D-erythritol 2,4-cyclic diphosphate + reduced [flavodoxin]. It participates in isoprenoid biosynthesis; isopentenyl diphosphate biosynthesis via DXP pathway; isopentenyl diphosphate from 1-deoxy-D-xylulose 5-phosphate: step 5/6. Its function is as follows. Converts 2C-methyl-D-erythritol 2,4-cyclodiphosphate (ME-2,4cPP) into 1-hydroxy-2-methyl-2-(E)-butenyl 4-diphosphate. This Acinetobacter baumannii (strain AB307-0294) protein is 4-hydroxy-3-methylbut-2-en-1-yl diphosphate synthase (flavodoxin).